A 222-amino-acid polypeptide reads, in one-letter code: PKHD-type hydroxylase Syncc9902_2001 (222 aa).

A Fe2OG dioxygenase domain is found at 80 to 174; that stretch reads RVHSILISRS…RLVCVGWIES (95 aa). Positions 98, 100, and 155 each coordinate Fe cation. Residue arginine 165 participates in 2-oxoglutarate binding.

Fe(2+) serves as cofactor. Requires L-ascorbate as cofactor.

The sequence is that of PKHD-type hydroxylase Syncc9902_2001 from Synechococcus sp. (strain CC9902).